A 408-amino-acid polypeptide reads, in one-letter code: Neutral cholesterol ester hydrolase 1 (408 aa).

Residues 1–4 are Cytoplasmic-facing; that stretch reads MRSS. A helical; Signal-anchor for type II membrane protein membrane pass occupies residues 5-25; that stretch reads CVLLTALLALAAYYIYIPLPS. The Lumenal portion of the chain corresponds to 26–408; the sequence is SVSDPWKLML…SYIKWLDQNL (383 aa). The Involved in the stabilization of the negatively charged intermediate by the formation of the oxyanion hole motif lies at 113-115; that stretch reads HGG. The active site involves S191. N-linked (GlcNAc...) asparagine glycans are attached at residues N270 and N287. Residues D348 and H378 contribute to the active site. N389 carries an N-linked (GlcNAc...) asparagine glycan.

The protein belongs to the 'GDXG' lipolytic enzyme family. Post-translationally, N-glycosylated.

The protein resides in the cell membrane. The protein localises to the microsome. It carries out the reaction a 1-O-alkyl-2-acetyl-sn-glycerol + H2O = a 1-O-alkyl-sn-glycerol + acetate + H(+). The enzyme catalyses 1-O-hexadecyl-2-acetyl-sn-glycerol + H2O = 1-O-hexadecyl-sn-glycerol + acetate + H(+). The catalysed reaction is a cholesterol ester + H2O = cholesterol + a fatty acid + H(+). It catalyses the reaction cholesteryl (9Z-octadecenoate) + H2O = cholesterol + (9Z)-octadecenoate + H(+). Functionally, hydrolyzes 2-acetyl monoalkylglycerol ether (1-O-alkyl-2-acetyl-sn-glycerol), the penultimate precursor of the pathway for de novo synthesis of platelet-activating factor. May be responsible for the hydrolysis of cholesterol esters (such as cholesteryl (9Z-octadecenoate)) in macrophages. Also involved in organ detoxification by hydrolyzing exogenous organophosphorus compounds. The chain is Neutral cholesterol ester hydrolase 1 (NCEH1) from Bos taurus (Bovine).